The sequence spans 552 residues: DNA ligase (552 aa).

Residue Glu-229 coordinates ATP. Lys-231 serves as the catalytic N6-AMP-lysine intermediate. Positions 236 and 283 each coordinate ATP. Residues Glu-283 and Glu-377 each contribute to the Mg(2+) site. 2 residues coordinate ATP: Lys-382 and Lys-397.

The protein belongs to the ATP-dependent DNA ligase family. In terms of assembly, interacts with host TOP2A and TOP2B. Mg(2+) serves as cofactor.

The protein localises to the host cytoplasm. It carries out the reaction ATP + (deoxyribonucleotide)n-3'-hydroxyl + 5'-phospho-(deoxyribonucleotide)m = (deoxyribonucleotide)n+m + AMP + diphosphate.. In terms of biological role, DNA ligase that seals nicks in double-stranded DNA during DNA replication, DNA recombination and DNA repair. Recruits cellular topoisomerase II to sites of viral replication and assembly. This Vaccinia virus (strain Ankara) (VACV) protein is DNA ligase (OPG180).